We begin with the raw amino-acid sequence, 312 residues long: Glyoxylate/hydroxypyruvate reductase A (312 aa).

Arginine 227 is an active-site residue. Histidine 275 (proton donor) is an active-site residue.

It belongs to the D-isomer specific 2-hydroxyacid dehydrogenase family. GhrA subfamily.

The protein localises to the cytoplasm. The catalysed reaction is glycolate + NADP(+) = glyoxylate + NADPH + H(+). It carries out the reaction (R)-glycerate + NAD(+) = 3-hydroxypyruvate + NADH + H(+). The enzyme catalyses (R)-glycerate + NADP(+) = 3-hydroxypyruvate + NADPH + H(+). In terms of biological role, catalyzes the NADPH-dependent reduction of glyoxylate and hydroxypyruvate into glycolate and glycerate, respectively. This is Glyoxylate/hydroxypyruvate reductase A from Salmonella paratyphi C (strain RKS4594).